The chain runs to 588 residues: Sulfite reductase [NADPH] hemoprotein beta-component (588 aa).

Positions 442, 448, 487, and 491 each coordinate [4Fe-4S] cluster. A siroheme-binding site is contributed by Cys491.

This sequence belongs to the nitrite and sulfite reductase 4Fe-4S domain family. Alpha(8)-beta(8). The alpha component is a flavoprotein, the beta component is a hemoprotein. It depends on siroheme as a cofactor. Requires [4Fe-4S] cluster as cofactor.

The enzyme catalyses hydrogen sulfide + 3 NADP(+) + 3 H2O = sulfite + 3 NADPH + 4 H(+). The protein operates within sulfur metabolism; hydrogen sulfide biosynthesis; hydrogen sulfide from sulfite (NADPH route): step 1/1. Functionally, component of the sulfite reductase complex that catalyzes the 6-electron reduction of sulfite to sulfide. This is one of several activities required for the biosynthesis of L-cysteine from sulfate. In Actinobacillus pleuropneumoniae serotype 3 (strain JL03), this protein is Sulfite reductase [NADPH] hemoprotein beta-component.